We begin with the raw amino-acid sequence, 639 residues long: ATP-dependent RNA helicase DDX51 (639 aa).

The interval 1-131 (MALFHIARYA…QEDVQRPPAP (131 aa)) is disordered. Alanine 2 bears the N-acetylalanine mark. Over residues 24 to 48 (AGSRARVLLERLQNRARERQQREPE) the composition is skewed to basic and acidic residues. Residues 50-63 (ETTGTAGEGEAAAA) show a composition bias toward low complexity. Basic residues predominate over residues 64 to 76 (GKRRRRPRRRRRV). Phosphoserine is present on serine 79. Residues 94–105 (ADKDVDAGRGEE) are compositionally biased toward basic and acidic residues. The short motif at 193–201 (YFPVQAAVI) is the Q motif element. The 210-residue stretch at 215–424 (GRGGYQPSDL…RLGLYQPRLF (210 aa)) folds into the Helicase ATP-binding domain. 228–235 (APTGSGKT) serves as a coordination point for ATP. A DEAD box motif is present at residues 343–346 (DEAD). A Phosphoserine modification is found at serine 432. Residues 467 to 615 (IVLHLVLRMS…EIPRKLLQPL (149 aa)) enclose the Helicase C-terminal domain.

This sequence belongs to the DEAD box helicase family. DDX51/DBP6 subfamily.

Its subcellular location is the nucleus. It localises to the nucleolus. It carries out the reaction ATP + H2O = ADP + phosphate + H(+). ATP-binding RNA helicase involved in the biogenesis of 60S ribosomal subunits. The sequence is that of ATP-dependent RNA helicase DDX51 (Ddx51) from Mus musculus (Mouse).